A 166-amino-acid polypeptide reads, in one-letter code: Large ribosomal subunit protein uL10 (166 aa).

It belongs to the universal ribosomal protein uL10 family. As to quaternary structure, part of the ribosomal stalk of the 50S ribosomal subunit. The N-terminus interacts with L11 and the large rRNA to form the base of the stalk. The C-terminus forms an elongated spine to which L12 dimers bind in a sequential fashion forming a multimeric L10(L12)X complex.

Its function is as follows. Forms part of the ribosomal stalk, playing a central role in the interaction of the ribosome with GTP-bound translation factors. The chain is Large ribosomal subunit protein uL10 from Streptococcus pneumoniae (strain ATCC 700669 / Spain 23F-1).